The chain runs to 250 residues: Cytochrome c oxidase subunit 2 (250 aa).

The Mitochondrial intermembrane portion of the chain corresponds to 1–39; sequence MFFLINKLVMNFDAPSPWGIYFQDSATPQMEGLNELHDN. Residues 40–60 form a helical membrane-spanning segment; sequence IMYYLVVILFAVGWILLSIVI. Residues 61–81 lie on the Mitochondrial matrix side of the membrane; sequence NYVSTKSPISHKYLNHGTLIE. Residues 82-104 traverse the membrane as a helical segment; the sequence is LIWTITPAVILILIAFPSFKLLY. At 105–250 the chain is on the mitochondrial intermembrane side; the sequence is LMDEVSDPSM…EKFLIWLKEQ (146 aa). Residues His185, Cys220, Glu222, Cys224, His228, and Met231 each coordinate Cu cation. Glu222 provides a ligand contact to Mg(2+).

The protein belongs to the cytochrome c oxidase subunit 2 family. Component of the cytochrome c oxidase (complex IV, CIV), a multisubunit enzyme composed of a catalytic core of 3 subunits and several supernumerary subunits. The complex exists as a monomer or a dimer and forms supercomplexes (SCs) in the inner mitochondrial membrane with ubiquinol-cytochrome c oxidoreductase (cytochrome b-c1 complex, complex III, CIII). Requires Cu cation as cofactor.

The protein resides in the mitochondrion inner membrane. The enzyme catalyses 4 Fe(II)-[cytochrome c] + O2 + 8 H(+)(in) = 4 Fe(III)-[cytochrome c] + 2 H2O + 4 H(+)(out). In terms of biological role, component of the cytochrome c oxidase, the last enzyme in the mitochondrial electron transport chain which drives oxidative phosphorylation. The respiratory chain contains 3 multisubunit complexes succinate dehydrogenase (complex II, CII), ubiquinol-cytochrome c oxidoreductase (cytochrome b-c1 complex, complex III, CIII) and cytochrome c oxidase (complex IV, CIV), that cooperate to transfer electrons derived from NADH and succinate to molecular oxygen, creating an electrochemical gradient over the inner membrane that drives transmembrane transport and the ATP synthase. Cytochrome c oxidase is the component of the respiratory chain that catalyzes the reduction of oxygen to water. Electrons originating from reduced cytochrome c in the intermembrane space (IMS) are transferred via the dinuclear copper A center (CU(A)) of subunit 2 and heme A of subunit 1 to the active site in subunit 1, a binuclear center (BNC) formed by heme A3 and copper B (CU(B)). The BNC reduces molecular oxygen to 2 water molecules using 4 electrons from cytochrome c in the IMS and 4 protons from the mitochondrial matrix. The sequence is that of Cytochrome c oxidase subunit 2 (COII) from Podospora anserina (strain S / ATCC MYA-4624 / DSM 980 / FGSC 10383) (Pleurage anserina).